The primary structure comprises 181 residues: MSQPLKEKYKSEIVPNLIKTFGYKNIHQVPKITKIQINRGLGAAASNNSTLQQTIEEIRIITGQQPIVTMAKKSIAGFKLRENQPLGVTVTLRNTLMFSFLERLINLVLPRVRDFNGLNPNGFDQHGNYNFGLDNQLVFPEISYESVDQQRGFNITIVTTAKTQVEGFNLLQSYGFPFKKN.

It belongs to the universal ribosomal protein uL5 family. In terms of assembly, part of the 50S ribosomal subunit; contacts the 5S rRNA.

The protein resides in the plastid. Its subcellular location is the chloroplast. Binds 5S rRNA, forms part of the central protuberance of the 50S subunit. The chain is Large ribosomal subunit protein uL5c (rpl5) from Heterosigma akashiwo (strain NIES-293 / 8280G21-1).